We begin with the raw amino-acid sequence, 245 residues long: Lytic switch protein BZLF1 (245 aa).

The tract at residues 1 to 167 is transactivation; that stretch reads MMDPNSTSED…RTRKPLQPES (167 aa). Phosphothreonine occurs at positions 14 and 159. The disordered stretch occupies residues 145–167; that stretch reads GAPQPAPAAAPARRTRKPLQPES. Positions 157 to 194 match the Bipartite nuclear localization signal motif; it reads RRTRKPLQPESLEECDSELEIKRYKNRVASRKCRAKFK. 3 positions are modified to phosphoserine: Ser-167, Ser-173, and Ser-186. Residues 178–195 form a basic motif region; that stretch reads KRYKNRVASRKCRAKFKH. The region spanning 178 to 228 is the bZIP domain; it reads KRYKNRVASRKCRAKFKHLLQHYREVASAKSSENDRLRLLLKQMCPSLDVD. The segment at 196-228 is leucine-zipper; the sequence is LLQHYREVASAKSSENDRLRLLLKQMCPSLDVD. Residues 229 to 245 form an accessory activation domain region; that stretch reads SIIPRTPDVLHEDLLNF.

Belongs to the bZIP family. In terms of assembly, homodimer. Interacts (via b-ZIP domain) with the DNA polymerase processivity factor BMRF1 (via N-terminus); this interaction may inhibit BZLF1-induced transcription of the BMRF1 promoter. Interacts with human UBN1, CRTC2 and RACK1. Interacts (via N-terminus) with human PAX5 (via N-terminus); this interaction inhibits BZLF1-mediated lytic viral reactivation. Interacts (via leucine-zipper domain) with host CEBPA; this interaction induces G1 host cell cycle arrest. Interacts (via C-terminus) with host TP53BP1 (via C-terminus); this interaction is involved in the activation of the viral lytic cycle. Interacts with host chromatin-remodeling ATPase INO80; this interaction participates to the activation of early lytic viral genes by BZLF1. Interacts with host regulator of chromatin SMARCA5/hSNF2H; this interaction participates to the activation of early lytic viral genes by BZLF1. Interacts with host PLSCR1/Phospholipid scramblase 1; this interaction negatively regulates the transcriptional regulatory activity of BZLF1 by preventing the formation of the BZLF1-CBP complex.

It is found in the host nucleus. Functionally, transcription factor that acts as a molecular switch to induce the transition from the latent to the lytic or productive phase of the virus cycle. Mediates the switch from the latent to the lytic cycle of infection in cells containing a highly methylated viral genome. Probably binds to silenced chromatin and recruits host chromatin-remodeling enzymes. Regulates this switch by binding to 2 types of ZEBRA response elements (ZREs): the CpG-free AP-1 like elements (latency) and the methylated CpG-containing elements (lytic replication). Activates preferentially the methylated forms of the viral lytic R (BRLF1) and Na (BRRF1) gene promoters, the latters being the first genes activated during Z-mediated reactivation in latently infected cells. BZLF1 and BRLF1 act together to trigger lytic replication. Also binds the lytic origin of replication, oriLyt. Induces G1 cell cycle arrest by stabilizing the host CCAAT/enhancer binding protein CEBPA. This function is important because the lytic cycle preferentially takes place in host cells arrested in G1. The sequence is that of Lytic switch protein BZLF1 from Homo sapiens (Human).